Reading from the N-terminus, the 421-residue chain is Forkhead box protein J1 (421 aa).

Disordered stretches follow at residues 1–34 (MAES…DSLT) and 48–116 (KAPA…DYAT). A compositionally biased stretch (low complexity) spans 66–80 (PGSAAPGSPLAADPA). The span at 90–99 (KPTSSCTSRS) shows a compositional bias: polar residues. The segment at residues 120 to 210 (VKPPYSYATL…YAERLLSGAF (91 aa)) is a DNA-binding region (fork-head). The disordered stretch occupies residues 261-302 (AGWGAGEGRLGHKRKQPLPKRVAKVPRPPSTLLPTPEEQGEL). Residues 271 to 284 (GHKRKQPLPKRVAK) are compositionally biased toward basic residues.

It belongs to the FOXJ1 family. In terms of tissue distribution, testis, oviduct, lung and brain cortex.

The protein resides in the nucleus. Transcription factor specifically required for the formation of motile cilia. Acts by activating transcription of genes that mediate assembly of motile cilia, such as CFAP157. Binds the DNA consensus sequences 5'-HWDTGTTTGTTTA-3' or 5'-KTTTGTTGTTKTW-3' (where H is not G, W is A or T, D is not C, and K is G or T). Activates the transcription of a variety of ciliary proteins in the developing brain and lung. This Homo sapiens (Human) protein is Forkhead box protein J1.